The chain runs to 387 residues: Patatin group D-2 (387 aa).

The signal sequence occupies residues 1 to 23; the sequence is MATTKSFLILIVMILATTSSTFA. The region spanning 32-230 is the PNPLA domain; it reads LSIDGGGIKG…TVADPALLSI (199 aa). The GXGXXG motif lies at 36–41; that stretch reads GGGIKG. Positions 75–79 match the GXSXG motif; that stretch reads GTSTG. The active-site Nucleophile is Ser-77. N-linked (GlcNAc...) asparagine glycosylation is present at Asn-115. The active-site Proton acceptor is Asp-216. A DGA/G motif is present at residues 216–218; the sequence is DGA. Residues 361–385 adopt a coiled-coil conformation; sequence ETYEEALKRFAKLLSDRKKLRANKA.

The protein belongs to the patatin family. In terms of tissue distribution, tuber.

The protein resides in the vacuole. Its function is as follows. Probable lipolytic acyl hydrolase (LAH), an activity which is thought to be involved in the response of tubers to pathogens. This is Patatin group D-2 from Solanum tuberosum (Potato).